We begin with the raw amino-acid sequence, 345 residues long: Histidinol-phosphate aminotransferase (345 aa).

At lysine 205 the chain carries N6-(pyridoxal phosphate)lysine.

Belongs to the class-II pyridoxal-phosphate-dependent aminotransferase family. Histidinol-phosphate aminotransferase subfamily. As to quaternary structure, homodimer. Pyridoxal 5'-phosphate is required as a cofactor.

The enzyme catalyses L-histidinol phosphate + 2-oxoglutarate = 3-(imidazol-4-yl)-2-oxopropyl phosphate + L-glutamate. Its pathway is amino-acid biosynthesis; L-histidine biosynthesis; L-histidine from 5-phospho-alpha-D-ribose 1-diphosphate: step 7/9. The sequence is that of Histidinol-phosphate aminotransferase from Parabacteroides distasonis (strain ATCC 8503 / DSM 20701 / CIP 104284 / JCM 5825 / NCTC 11152).